We begin with the raw amino-acid sequence, 981 residues long: Ephrin type-A receptor 3 (981 aa).

The N-terminal stretch at 1 to 20 (MALFRIYSFLAPFHILVLCQ) is a signal peptide. The Extracellular segment spans residues 21–545 (ALRNYPDNEV…LAVGDPNQQT (525 aa)). Positions 29–210 (EVTLLDSMSA…FYKRCPLAVL (182 aa)) constitute an Eph LBD domain. Fibronectin type-III domains follow at residues 328-441 (PPSA…TSQT) and 442-533 (VSVI…TSHE). Asn340, Asn410, Asn435, and Asn485 each carry an N-linked (GlcNAc...) asparagine glycan. A helical transmembrane segment spans residues 546 to 566 (ILAISVAGGAVLLVLLVACFI). At 567 to 981 (VSGRRCGYIK…QAHHGTQVQV (415 aa)) the chain is on the cytoplasmic side. Tyr601 and Tyr607 each carry phosphotyrosine; by autocatalysis. A Protein kinase domain is found at 626–887 (IRIERVIGAG…QIVNTLDRLI (262 aa)). Residues 633–638 (GAGEFG), Lys658, and 705–711 (EYMENGS) contribute to the ATP site. Phosphotyrosine; by autocatalysis is present on Tyr706. Asp751 (proton acceptor) is an active-site residue. ATP is bound at residue 755–756 (RN). Phosphotyrosine; by autocatalysis is present on residues Tyr784 and Tyr927. Residues 910 to 974 (AAVNTVEDWL…LSSIQCLQAH (65 aa)) enclose the SAM domain. The PDZ-binding motif lies at 979-981 (VQV).

It belongs to the protein kinase superfamily. Tyr protein kinase family. Ephrin receptor subfamily. In terms of assembly, heterotetramer upon binding of the ligand. The heterotetramer is composed of an ephrin dimer and a receptor dimer. Oligomerization is probably required to induce biological responses. Autophosphorylates upon activation by efna5. As to expression, widely expressed in the developing zebrafish nervous system.

It localises to the cell membrane. The enzyme catalyses L-tyrosyl-[protein] + ATP = O-phospho-L-tyrosyl-[protein] + ADP + H(+). In terms of biological role, receptor tyrosine kinase which binds promiscuously membrane-bound ephrin family ligands residing on adjacent cells, leading to contact-dependent bidirectional signaling into neighboring cells. The signaling pathway downstream of the receptor is referred to as forward signaling while the signaling pathway downstream of the ephrin ligand is referred to as reverse signaling. Highly promiscuous for ephrin-A ligands it binds preferentially efna5. Upon activation by efna5 regulates cell-cell adhesion, cytoskeletal organization and cell migration. Plays a role in cardiac cells migration and differentiation probably through activation by efna1. Involved in the retinotectal mapping of neurons. May also control the segregation but not the guidance of motor and sensory axons during neuromuscular circuit development. This chain is Ephrin type-A receptor 3 (epha3), found in Danio rerio (Zebrafish).